The chain runs to 552 residues: Non-structural protein NS1 (552 aa).

Belongs to the orbivirus non-structural protein NS1 family.

The polypeptide is Non-structural protein NS1 (Segment-5) (Epizootic hemorrhagic disease virus 2 (strain Alberta) (EHDV-2)).